Reading from the N-terminus, the 195-residue chain is IMP cyclohydrolase (195 aa).

This sequence belongs to the archaeal IMP cyclohydrolase family.

It carries out the reaction IMP + H2O = 5-formamido-1-(5-phospho-D-ribosyl)imidazole-4-carboxamide. It participates in purine metabolism; IMP biosynthesis via de novo pathway; IMP from 5-formamido-1-(5-phospho-D-ribosyl)imidazole-4-carboxamide: step 1/1. In terms of biological role, catalyzes the cyclization of 5-formylamidoimidazole-4-carboxamide ribonucleotide to IMP. The protein is IMP cyclohydrolase of Haloquadratum walsbyi (strain DSM 16790 / HBSQ001).